A 121-amino-acid chain; its full sequence is Large ribosomal subunit protein bL19 (121 aa).

The protein belongs to the bacterial ribosomal protein bL19 family.

This protein is located at the 30S-50S ribosomal subunit interface and may play a role in the structure and function of the aminoacyl-tRNA binding site. This chain is Large ribosomal subunit protein bL19, found in Amoebophilus asiaticus (strain 5a2).